A 430-amino-acid chain; its full sequence is Glutamate-1-semialdehyde 2,1-aminomutase (430 aa).

An N6-(pyridoxal phosphate)lysine modification is found at K265.

It belongs to the class-III pyridoxal-phosphate-dependent aminotransferase family. HemL subfamily. As to quaternary structure, homodimer. The cofactor is pyridoxal 5'-phosphate.

The protein resides in the cytoplasm. It carries out the reaction (S)-4-amino-5-oxopentanoate = 5-aminolevulinate. It participates in porphyrin-containing compound metabolism; protoporphyrin-IX biosynthesis; 5-aminolevulinate from L-glutamyl-tRNA(Glu): step 2/2. The polypeptide is Glutamate-1-semialdehyde 2,1-aminomutase (Helicobacter pylori (strain Shi470)).